The primary structure comprises 539 residues: Phosphoenolpyruvate carboxykinase (ATP) (539 aa).

The substrate site is built by arginine 61, tyrosine 195, and lysine 201. ATP is bound by residues lysine 201, histidine 220, and 238–246; that span reads GLSGTGKTT. The Mn(2+) site is built by lysine 201 and histidine 220. Aspartate 259 contacts Mn(2+). Positions 287, 325, and 450 each coordinate ATP. Arginine 325 lines the substrate pocket.

It belongs to the phosphoenolpyruvate carboxykinase (ATP) family. Mn(2+) serves as cofactor.

The protein resides in the cytoplasm. It catalyses the reaction oxaloacetate + ATP = phosphoenolpyruvate + ADP + CO2. It participates in carbohydrate biosynthesis; gluconeogenesis. Functionally, involved in the gluconeogenesis. Catalyzes the conversion of oxaloacetate (OAA) to phosphoenolpyruvate (PEP) through direct phosphoryl transfer between the nucleoside triphosphate and OAA. The sequence is that of Phosphoenolpyruvate carboxykinase (ATP) from Methylorubrum populi (strain ATCC BAA-705 / NCIMB 13946 / BJ001) (Methylobacterium populi).